Here is a 265-residue protein sequence, read N- to C-terminus: Glutamate 5-kinase (265 aa).

Lys-15 contacts ATP. The substrate site is built by Ser-55, Asp-142, and Asn-158. ATP is bound by residues 178 to 179 (SD) and 220 to 226 (TGGMVTK).

The protein belongs to the glutamate 5-kinase family.

The protein resides in the cytoplasm. The catalysed reaction is L-glutamate + ATP = L-glutamyl 5-phosphate + ADP. It functions in the pathway amino-acid biosynthesis; L-proline biosynthesis; L-glutamate 5-semialdehyde from L-glutamate: step 1/2. Catalyzes the transfer of a phosphate group to glutamate to form L-glutamate 5-phosphate. This Lactiplantibacillus plantarum (strain ATCC BAA-793 / NCIMB 8826 / WCFS1) (Lactobacillus plantarum) protein is Glutamate 5-kinase.